The chain runs to 1045 residues: FERM, ARHGEF and pleckstrin domain-containing protein 1 (1045 aa).

Residues methionine 1–glycine 37 form a disordered region. Serine 20 and serine 23 each carry phosphoserine. Threonine 24 bears the Phosphothreonine mark. Residues valine 40–glutamate 320 enclose the FERM domain. 7 positions are modified to phosphoserine: serine 340, serine 373, serine 389, serine 403, serine 418, serine 427, and serine 433. The interval phenylalanine 361–lysine 534 is disordered. Residues serine 373–threonine 396 show a composition bias toward polar residues. 2 stretches are compositionally biased toward polar residues: residues threonine 471–glycine 489 and valine 496–proline 511. Serine 510 and serine 514 each carry phosphoserine. A DH domain is found at lysine 540–threonine 730. The PH 1 domain maps to glutamate 759–aspartate 856. A phosphoserine mark is found at serine 833, serine 872, and serine 878. The segment at proline 864–glutamine 903 is disordered. Threonine 883 is subject to Phosphothreonine. Phosphoserine occurs at positions 889, 896, and 899. The region spanning glutamate 932–serine 1029 is the PH 2 domain.

Interacts with CADM1. Interacts with RAC1. In terms of tissue distribution, detected in cAMP-treated chondrocytes, but not in untreated chondrocytes. Detected in fetal brain, heart and spleen, and in adult testis, kidney and lung.

It is found in the cell membrane. Its subcellular location is the synapse. The protein resides in the synaptosome. The protein localises to the cytoplasm. It localises to the cytosol. It is found in the cell projection. Its subcellular location is the filopodium. The protein resides in the dendrite. The protein localises to the dendritic spine. Its function is as follows. Functions as a guanine nucleotide exchange factor for RAC1. May play a role in semaphorin signaling. Plays a role in the assembly and disassembly of dendritic filopodia, the formation of dendritic spines, regulation of dendrite length and ultimately the formation of synapses. In Homo sapiens (Human), this protein is FERM, ARHGEF and pleckstrin domain-containing protein 1 (FARP1).